Here is a 1112-residue protein sequence, read N- to C-terminus: Constitutive coactivator of PPAR-gamma-like protein 1 (1112 aa).

The segment at 339-403 (PPHYLARPNP…YSLSEPALTL (65 aa)) is interaction with YES1, SRC and FYN. Residues 372–525 (QAKPAVPQVP…GKGSHMGTVQ (154 aa)) are disordered. Polar residues-rich tracts occupy residues 403 to 418 (LDTS…SYSN) and 433 to 445 (SPIN…SPNH). Basic and acidic residues predominate over residues 479–500 (GWEKTGSHAEPLARGDPGDQVK). Residues 503-512 (GSSTASSGSQ) show a composition bias toward polar residues. Residue Thr653 is modified to Phosphothreonine. Positions 827 to 1112 (AEQAAKVEKM…LEAAVLNKEE (286 aa)) are RNA binding. Omega-N-methylarginine is present on residues Arg871, Arg882, and Arg884. Residues 919 to 943 (AFSGSDSSRTSKSQGGVQPIPSQGG) are disordered. Residues 922 to 934 (GSDSSRTSKSQGG) show a composition bias toward polar residues. Lys930 is subject to N6-acetyllysine. At Ser958 the chain carries Phosphoserine. Omega-N-methylarginine is present on residues Arg980 and Arg984. Ser1021 and Ser1042 each carry phosphoserine. Positions 1030–1090 (KSKSGESKSS…PCNTNPHLNA (61 aa)) are disordered. The segment covering 1070–1090 (HSESALNNDSKPCNTNPHLNA) has biased composition (polar residues).

It belongs to the constitutive coactivator of PPAR-gamma family. Interacts with PURA. Interacts with SRC family protein kinases YES1, SRC and FYN. Upon tyrosine phosphorylation, interacts with PIK3R1. Interacts with IGF2BP1/IMP-1 in an RNA-dependent manner. In terms of processing, arg-980 is dimethylated, probably to asymmetric dimethylarginine. Phosphorylated on tyrosine by src family kinases upon ultraviolet exposure. As to expression, in the brain, predominantly expressed in the hippocampus, caudate putamen, cerebral cortex and cerebellum. Expression is restricted to neurons (at protein level).

The protein resides in the cytoplasm. It is found in the cell membrane. In terms of biological role, component of the oxidative stress-induced survival signaling. May regulate the activation of SRC family protein kinases. May act as a scaffolding protein enabling SRC family protein kinases to phosphorylate and activate PI3-kinase. Binds IGF2 RNA and promotes the production of IGF2 protein. The chain is Constitutive coactivator of PPAR-gamma-like protein 1 (FAM120A) from Mus musculus (Mouse).